We begin with the raw amino-acid sequence, 283 residues long: Pantothenate synthetase (283 aa).

30–37 provides a ligand contact to ATP; the sequence is MGNLHAGH. Histidine 37 serves as the catalytic Proton donor. Glutamine 61 is a (R)-pantoate binding site. A beta-alanine-binding site is contributed by glutamine 61. 149-152 is an ATP binding site; the sequence is GEKD. Glutamine 155 serves as a coordination point for (R)-pantoate. Residues valine 178 and 186–189 each bind ATP; that span reads LSSR.

It belongs to the pantothenate synthetase family. In terms of assembly, homodimer.

The protein resides in the cytoplasm. It carries out the reaction (R)-pantoate + beta-alanine + ATP = (R)-pantothenate + AMP + diphosphate + H(+). It functions in the pathway cofactor biosynthesis; (R)-pantothenate biosynthesis; (R)-pantothenate from (R)-pantoate and beta-alanine: step 1/1. In terms of biological role, catalyzes the condensation of pantoate with beta-alanine in an ATP-dependent reaction via a pantoyl-adenylate intermediate. This Pseudomonas aeruginosa (strain UCBPP-PA14) protein is Pantothenate synthetase.